A 483-amino-acid chain; its full sequence is Glutamate--tRNA ligase (483 aa).

The 'HIGH' region motif lies at 11–21 (PSPTGHLHIGN). Zn(2+)-binding residues include Cys-108, Cys-110, His-135, and Asp-137. Positions 252–256 (KLSKR) match the 'KMSKS' region motif. Lys-255 contacts ATP.

The protein belongs to the class-I aminoacyl-tRNA synthetase family. Glutamate--tRNA ligase type 1 subfamily. In terms of assembly, monomer. The cofactor is Zn(2+).

The protein resides in the cytoplasm. The catalysed reaction is tRNA(Glu) + L-glutamate + ATP = L-glutamyl-tRNA(Glu) + AMP + diphosphate. Catalyzes the attachment of glutamate to tRNA(Glu) in a two-step reaction: glutamate is first activated by ATP to form Glu-AMP and then transferred to the acceptor end of tRNA(Glu). This chain is Glutamate--tRNA ligase, found in Bacillus subtilis (strain 168).